A 209-amino-acid polypeptide reads, in one-letter code: Superoxide dismutase [Mn/Fe] (209 aa).

Fe(3+)-binding residues include histidine 38, histidine 90, aspartate 172, and histidine 176. Histidine 38, histidine 90, aspartate 172, and histidine 176 together coordinate Mn(2+).

The protein belongs to the iron/manganese superoxide dismutase family. Requires Mn(2+) as cofactor. Fe(3+) serves as cofactor.

The catalysed reaction is 2 superoxide + 2 H(+) = H2O2 + O2. Destroys superoxide anion radicals which are normally produced within the cells and which are toxic to biological systems. Catalyzes the dismutation of superoxide anion radicals into O2 and H2O2 by successive reduction and oxidation of the transition metal ion at the active site. This chain is Superoxide dismutase [Mn/Fe] (sodB), found in Rickettsia conorii (strain ATCC VR-613 / Malish 7).